A 436-amino-acid polypeptide reads, in one-letter code: GTPase Der (436 aa).

EngA-type G domains lie at P3 to D168 and I177 to S352. GTP-binding positions include G9–S16, D56–Y60, N120–E123, G183–S190, D230–L234, and N295–D298. One can recognise a KH-like domain in the interval R353–K436.

Belongs to the TRAFAC class TrmE-Era-EngA-EngB-Septin-like GTPase superfamily. EngA (Der) GTPase family. As to quaternary structure, associates with the 50S ribosomal subunit.

Functionally, GTPase that plays an essential role in the late steps of ribosome biogenesis. The protein is GTPase Der of Chlorobium luteolum (strain DSM 273 / BCRC 81028 / 2530) (Pelodictyon luteolum).